Reading from the N-terminus, the 817-residue chain is Probable beta-glucosidase G (817 aa).

The N-terminal stretch at 1 to 20 is a signal peptide; the sequence is MASIAHLIFSGLLAATVANS. 4 N-linked (GlcNAc...) asparagine glycosylation sites follow: asparagine 40, asparagine 58, asparagine 229, and asparagine 276. Residue aspartate 304 is part of the active site. N-linked (GlcNAc...) asparagine glycosylation is found at asparagine 343, asparagine 350, asparagine 402, asparagine 507, asparagine 563, asparagine 584, asparagine 623, asparagine 662, asparagine 679, and asparagine 715.

The protein belongs to the glycosyl hydrolase 3 family.

Its subcellular location is the secreted. It carries out the reaction Hydrolysis of terminal, non-reducing beta-D-glucosyl residues with release of beta-D-glucose.. Its pathway is glycan metabolism; cellulose degradation. In terms of biological role, beta-glucosidases are one of a number of cellulolytic enzymes involved in the degradation of cellulosic biomass. Catalyzes the last step releasing glucose from the inhibitory cellobiose. This Neosartorya fischeri (strain ATCC 1020 / DSM 3700 / CBS 544.65 / FGSC A1164 / JCM 1740 / NRRL 181 / WB 181) (Aspergillus fischerianus) protein is Probable beta-glucosidase G (bglG).